The primary structure comprises 97 residues: Putative membrane protein insertion efficiency factor (97 aa).

It belongs to the UPF0161 family.

Its subcellular location is the cell membrane. Functionally, could be involved in insertion of integral membrane proteins into the membrane. The chain is Putative membrane protein insertion efficiency factor from Lactobacillus helveticus (strain DPC 4571).